The primary structure comprises 540 residues: Solute carrier family 22 member 7 (540 aa).

Helical transmembrane passes span 21–41, 144–164, 172–192, 202–222, 232–252, 257–277, 344–364, 378–398, 402–422, 429–449, 462–484, and 488–510; these read LVLL…PIFM, VTST…GYLS, LLLV…ASVN, LTGS…LEWL, VIST…GYLI, WLLL…WWVP, VSLC…GLTL, LLFG…VRLV, LTEA…LLVS, ITAL…TAYL, TGMG…VVLL, and WLLL…VLLL.

This sequence belongs to the major facilitator (TC 2.A.1) superfamily. Organic cation transporter (TC 2.A.1.19) family. Abundant expression in male and female kidney. In kidney, expressed at the brush border of the proximal tubule S3 segment (S3) in the outer stripe and medullary rays. In kidney, expression is higher in female than male. Also expressed in female liver.

Its subcellular location is the basolateral cell membrane. The protein localises to the apical cell membrane. It is found in the cell membrane. The enzyme catalyses orotate(out) + L-glutamate(in) = orotate(in) + L-glutamate(out). The catalysed reaction is 3',5'-cyclic GMP(in) = 3',5'-cyclic GMP(out). It catalyses the reaction GMP(in) = GMP(out). It carries out the reaction 2'-deoxyguanosine(in) = 2'-deoxyguanosine(out). The enzyme catalyses GDP(in) = GDP(out). The catalysed reaction is guanosine(in) = guanosine(out). It catalyses the reaction GTP(in) = GTP(out). It carries out the reaction 3',5'-cyclic AMP(in) = 3',5'-cyclic AMP(out). The enzyme catalyses creatinine(in) = creatinine(out). The catalysed reaction is prostaglandin E2(out) = prostaglandin E2(in). It catalyses the reaction 2-oxoglutarate(in) = 2-oxoglutarate(out). It carries out the reaction glutarate(in) = glutarate(out). The enzyme catalyses urate(out) = urate(in). The catalysed reaction is estrone 3-sulfate(out) = estrone 3-sulfate(in). Its function is as follows. Functions as a Na(+)-independent bidirectional multispecific transporter. Contributes to the renal and hepatic elimination of endogenous organic compounds from the systemic circulation into the urine and bile, respectively. Capable of transporting a wide range of purine and pyrimidine nucleobases, nucleosides, and nucleotides with cGMP, 2'deoxyguanosine and GMP being the preferred substrates. Functions as a pH- and chloride-independent cGMP bidirectional facilitative transporter that can regulate both intracellular and extracellular levels of cGMP and may be involved in cGMP signaling pathways. Mediates orotate/glutamate bidirectional exchange and most likely display a physiological role in hepatic release of glutamate into the blood. Involved in renal secretion and possible reabsorption of creatinine. Able to uptake prostaglandin E2 (PGE2) and may contribute to PGE2 renal excretion. Also transports alpha-ketoglutarate and urate. Unlike human hortolog, able to transport glutarate. Apart from the orotate/glutamate exchange, the counterions for the uptake of other SLC22A7/OAT2 substrates remain to be identified. This Mus musculus (Mouse) protein is Solute carrier family 22 member 7.